The primary structure comprises 201 residues: Cardiotrophin-1 (201 aa).

This sequence belongs to the IL-6 superfamily. Highly expressed in heart, skeletal muscle, prostate and ovary. Lower levels in lung, kidney, pancreas, thymus, testis and small intestine. Little or no expression in brain, placenta, liver, spleen, colon or peripheral blood leukocytes.

The protein localises to the secreted. Its function is as follows. Induces cardiac myocyte hypertrophy in vitro. Binds to and activates the ILST/gp130 receptor. This chain is Cardiotrophin-1 (CTF1), found in Homo sapiens (Human).